Consider the following 602-residue polypeptide: Leucine-rich repeat-containing protein 40 (602 aa).

The tract at residues 1–20 (MSRLKRIAGQDPRAGFKAAG) is disordered. Ser71 is subject to Phosphoserine. 20 LRR repeats span residues 83-104 (DLTK…LRLL), 106-127 (ALTV…MREL), 129-150 (NLQK…ITNL), 152-173 (NLKC…FEQL), 175-196 (NLED…FSSL), 198-219 (SLVR…INRM), 221-242 (RLKH…LAGM), 244-265 (SLEL…PSCS), 266-286 (LLKE…EHLK), 290-311 (SILV…IILL), 313-335 (SLER…GNLH), 336-356 (LKFL…IINK), 400-421 (TLKI…VFNA), 426-447 (IITS…MVEL), 450-471 (MVSD…LCML), 473-494 (KLTF…MESL), 496-517 (RLQT…LYRI), 519-540 (TLET…KMKM), 543-564 (NLTT…LGNC), and 566-586 (NLRT…AILI).

The sequence is that of Leucine-rich repeat-containing protein 40 (LRRC40) from Macaca fascicularis (Crab-eating macaque).